The chain runs to 87 residues: MNIKLINIGFGNIVSANRIISIVSPESAPIKRIIQEARDRNMLIDATYGRRTRAVIIADSDHVILSAVQPETVAQRLTSKDDLEGEA.

It belongs to the RemA family.

The protein is Putative regulatory protein BH2513 of Halalkalibacterium halodurans (strain ATCC BAA-125 / DSM 18197 / FERM 7344 / JCM 9153 / C-125) (Bacillus halodurans).